The primary structure comprises 335 residues: Large ribosomal subunit protein uL10 (335 aa).

Residues 300 to 335 (QVSEQAAEKKEEKKEEEKKGPSEEEIGGGLSSLFGG) are disordered. Residues 305–321 (AAEKKEEKKEEEKKGPS) show a composition bias toward basic and acidic residues. A compositionally biased stretch (gly residues) spans 326–335 (GGGLSSLFGG).

This sequence belongs to the universal ribosomal protein uL10 family. In terms of assembly, part of the 50S ribosomal subunit. Forms part of the ribosomal stalk which helps the ribosome interact with GTP-bound translation factors. Forms a heptameric L10(L12)2(L12)2(L12)2 complex, where L10 forms an elongated spine to which the L12 dimers bind in a sequential fashion.

Its function is as follows. Forms part of the ribosomal stalk, playing a central role in the interaction of the ribosome with GTP-bound translation factors. The sequence is that of Large ribosomal subunit protein uL10 from Sulfolobus acidocaldarius (strain ATCC 33909 / DSM 639 / JCM 8929 / NBRC 15157 / NCIMB 11770).